A 434-amino-acid polypeptide reads, in one-letter code: Pre-B-cell leukemia transcription factor 3 (434 aa).

The segment at 20–41 (SVQGGMALPPPPHGHEGADGDG) is disordered. Positions 32 to 41 (HGHEGADGDG) are enriched in basic and acidic residues. One can recognise a PBC domain in the interval 41–234 (GRKQDIGDIL…VMILRSRFLD (194 aa)). The interval 48-127 (DILHQIMTIT…EGVSGPEKGG (80 aa)) is PBC-A. The tract at residues 130 to 234 (AAAAAAAAAS…VMILRSRFLD (105 aa)) is PBC-B. Residues 235–297 (ARRKRRNFSK…NKRIRYKKNI (63 aa)) constitute a DNA-binding region (homeobox; TALE-type). Low complexity predominate over residues 326 to 341 (NQTNSPTTPNSGSSGS). Disordered stretches follow at residues 326–349 (NQTNSPTTPNSGSSGSFNLPNSGD) and 405–434 (ANGGWQDATTPSSVTSPTEGPGSVHSDTSN). A compositionally biased stretch (polar residues) spans 405–422 (ANGGWQDATTPSSVTSPT).

Belongs to the TALE/PBX homeobox family. Interacts with PBXIP1.

It localises to the nucleus. Its function is as follows. Transcriptional activator that binds the sequence 5'-ATCAATCAA-3'. This chain is Pre-B-cell leukemia transcription factor 3 (Pbx3), found in Mus musculus (Mouse).